We begin with the raw amino-acid sequence, 603 residues long: UvrABC system protein C (603 aa).

One can recognise a GIY-YIG domain in the interval 15-92; it reads DKPGCYLMKN…IQKHQPYFNI (78 aa). The 36-residue stretch at 197–232 folds into the UVR domain; sequence ATVKRQLTKKMQRAAENMEFERAAEIRDQLHYIEVT.

The protein belongs to the UvrC family. Interacts with UvrB in an incision complex.

It is found in the cytoplasm. The UvrABC repair system catalyzes the recognition and processing of DNA lesions. UvrC both incises the 5' and 3' sides of the lesion. The N-terminal half is responsible for the 3' incision and the C-terminal half is responsible for the 5' incision. In Limosilactobacillus reuteri (strain DSM 20016) (Lactobacillus reuteri), this protein is UvrABC system protein C.